A 202-amino-acid chain; its full sequence is ATP-dependent Clp protease proteolytic subunit (202 aa).

Catalysis depends on S101, which acts as the Nucleophile. H126 is a catalytic residue.

This sequence belongs to the peptidase S14 family. As to quaternary structure, component of the chloroplastic Clp protease core complex.

The protein resides in the plastid. It is found in the chloroplast stroma. The enzyme catalyses Hydrolysis of proteins to small peptides in the presence of ATP and magnesium. alpha-casein is the usual test substrate. In the absence of ATP, only oligopeptides shorter than five residues are hydrolyzed (such as succinyl-Leu-Tyr-|-NHMec, and Leu-Tyr-Leu-|-Tyr-Trp, in which cleavage of the -Tyr-|-Leu- and -Tyr-|-Trp bonds also occurs).. Cleaves peptides in various proteins in a process that requires ATP hydrolysis. Has a chymotrypsin-like activity. Plays a major role in the degradation of misfolded proteins. The polypeptide is ATP-dependent Clp protease proteolytic subunit (Nuphar advena (Common spatterdock)).